Reading from the N-terminus, the 88-residue chain is MLTKEQKQEIIKKYQLHESDTGSPEVQIALLTERINRLNEHLQIHKKDFHSRRGLLKMVGQRRKLLNYLKEYDINRYRELIEKLGLRK.

It belongs to the universal ribosomal protein uS15 family. In terms of assembly, part of the 30S ribosomal subunit. Forms a bridge to the 50S subunit in the 70S ribosome, contacting the 23S rRNA.

In terms of biological role, one of the primary rRNA binding proteins, it binds directly to 16S rRNA where it helps nucleate assembly of the platform of the 30S subunit by binding and bridging several RNA helices of the 16S rRNA. Forms an intersubunit bridge (bridge B4) with the 23S rRNA of the 50S subunit in the ribosome. This is Small ribosomal subunit protein uS15 from Caldicellulosiruptor saccharolyticus (strain ATCC 43494 / DSM 8903 / Tp8T 6331).